Reading from the N-terminus, the 129-residue chain is Glycine cleavage system H protein (129 aa).

Positions 24 to 106 (LIRVGISAFA…HGAGWLLVVR (83 aa)) constitute a Lipoyl-binding domain. An N6-lipoyllysine modification is found at K65.

It belongs to the GcvH family. In terms of assembly, the glycine cleavage system is composed of four proteins: P, T, L and H. The cofactor is (R)-lipoate.

Its function is as follows. The glycine cleavage system catalyzes the degradation of glycine. The H protein shuttles the methylamine group of glycine from the P protein to the T protein. This chain is Glycine cleavage system H protein, found in Synechococcus sp. (strain CC9902).